We begin with the raw amino-acid sequence, 510 residues long: Proline--tRNA ligase (510 aa).

The protein belongs to the class-II aminoacyl-tRNA synthetase family. ProS type 3 subfamily. In terms of assembly, homodimer.

It is found in the cytoplasm. It carries out the reaction tRNA(Pro) + L-proline + ATP = L-prolyl-tRNA(Pro) + AMP + diphosphate. Its function is as follows. Catalyzes the attachment of proline to tRNA(Pro) in a two-step reaction: proline is first activated by ATP to form Pro-AMP and then transferred to the acceptor end of tRNA(Pro). The chain is Proline--tRNA ligase from Sphingomonas elodea.